The primary structure comprises 876 residues: Phosphoenolpyruvate carboxylase (876 aa).

Residues histidine 138 and lysine 543 contribute to the active site.

The protein belongs to the PEPCase type 1 family. Mg(2+) is required as a cofactor.

The catalysed reaction is oxaloacetate + phosphate = phosphoenolpyruvate + hydrogencarbonate. Forms oxaloacetate, a four-carbon dicarboxylic acid source for the tricarboxylic acid cycle. The chain is Phosphoenolpyruvate carboxylase from Pseudomonas fluorescens (strain Pf0-1).